Reading from the N-terminus, the 131-residue chain is NADPH-dependent 7-cyano-7-deazaguanine reductase (131 aa).

The active-site Thioimide intermediate is Cys47. Asp54 (proton donor) is an active-site residue. Substrate-binding positions include 69–71 and 88–89; these read MEL and HE.

This sequence belongs to the GTP cyclohydrolase I family. QueF type 1 subfamily.

The protein localises to the cytoplasm. It carries out the reaction 7-aminomethyl-7-carbaguanine + 2 NADP(+) = 7-cyano-7-deazaguanine + 2 NADPH + 3 H(+). It functions in the pathway tRNA modification; tRNA-queuosine biosynthesis. Catalyzes the NADPH-dependent reduction of 7-cyano-7-deazaguanine (preQ0) to 7-aminomethyl-7-deazaguanine (preQ1). The protein is NADPH-dependent 7-cyano-7-deazaguanine reductase of Microcystis aeruginosa (strain NIES-843 / IAM M-2473).